The following is a 342-amino-acid chain: Vancomycin B-type resistance protein VanB (342 aa).

ATP contacts are provided by residues Lys-132, 168–170 (FVK), 176–177 (SS), 206–213 (EQAISGCE), and Phe-240. The ATP-grasp domain occupies 136–337 (YILTKNAGIA…LPALIDSLIT (202 aa)). Residue His-243 coordinates substrate. ATP is bound at residue 303–304 (NE). Positions 304 and 306 each coordinate Mg(2+).

The protein belongs to the D-alanine--D-alanine ligase family. It depends on Mg(2+) as a cofactor. Requires Mn(2+) as cofactor.

Its subcellular location is the cell membrane. It carries out the reaction (R)-lactate + D-alanine + ATP = D-alanyl-(R)-lactate + ADP + phosphate. Required for high-level resistance to glycopeptides antibiotics. D-Ala--D-Ala ligase of altered specificity which catalyzes ester bond formation between D-Ala and various D-hydroxy acids; producing a peptidoglycan which does not terminate in D-alanine but in D-lactate, thus preventing vancomycin binding. The protein is Vancomycin B-type resistance protein VanB (vanB) of Enterococcus faecalis (strain ATCC 700802 / V583).